The following is an 85-amino-acid chain: Toxin 3FTx-Lei1 (85 aa).

The first 21 residues, Met-1 to Thr-21, serve as a signal peptide directing secretion. 5 cysteine pairs are disulfide-bonded: Cys-24/Cys-45, Cys-27/Cys-32, Cys-38/Cys-63, Cys-67/Cys-78, and Cys-79/Cys-84.

This sequence belongs to the three-finger toxin family. Ancestral subfamily. In terms of tissue distribution, expressed by the venom gland.

It is found in the secreted. The protein is Toxin 3FTx-Lei1 of Leioheterodon madagascariensis (Malagasy giant hognose snake).